The primary structure comprises 313 residues: uncharacterized protein (313 aa).

3 helical membrane-spanning segments follow: residues 41-61 (LAGT…GLMV), 68-88 (VHSV…FHYF), and 102-122 (QLLL…KLVL).

The protein belongs to the cytochrome b family.

It localises to the mitochondrion membrane. This is an uncharacterized protein from Arabidopsis thaliana (Mouse-ear cress).